Consider the following 232-residue polypeptide: Small ribosomal subunit protein uS3 (232 aa).

One can recognise a KH type-2 domain in the interval 39 to 107 (VRQFLTKELA…PAQINIAEVR (69 aa)).

It belongs to the universal ribosomal protein uS3 family. Part of the 30S ribosomal subunit. Forms a tight complex with proteins S10 and S14.

Functionally, binds the lower part of the 30S subunit head. Binds mRNA in the 70S ribosome, positioning it for translation. This Yersinia pseudotuberculosis serotype O:1b (strain IP 31758) protein is Small ribosomal subunit protein uS3.